Here is a 381-residue protein sequence, read N- to C-terminus: Bifunctional polyhydroxybutyrate synthase / ABC transporter periplasmic binding protein (381 aa).

An N-terminal signal peptide occupies residues 1-22 (MSKTFARSSLCALSMTIMTAHA).

This sequence belongs to the bacterial solute-binding protein PotD/PotF family.

The protein localises to the periplasm. It catalyses the reaction (3R)-3-hydroxybutanoyl-CoA + [(3R)-hydroxybutanoate](n) = [(3R)-hydroxybutanoate](n+1) + CoA. Functionally, catalyzes the formation of short polymers of R-3-hydroxybutyrate (cPHB). Involved in natural transformation. Probably part of the ABC transporter complex YdcSTUV. During natural transformation, may bind dsDNA and convey it to the inner membrane channel formed by YdcV. This chain is Bifunctional polyhydroxybutyrate synthase / ABC transporter periplasmic binding protein (ydcS), found in Escherichia coli (strain K12).